Reading from the N-terminus, the 309-residue chain is Tyrosine recombinase XerD (309 aa).

A Core-binding (CB) domain is found at 3 to 88 (MRASLAIENF…ALRQFFRFLY (86 aa)). The Tyr recombinase domain maps to 109–302 (PLPKIMSVEN…LEERLHKLVS (194 aa)). Residues Arg158, Lys182, His254, Arg257, and His280 contribute to the active site. Tyr289 acts as the O-(3'-phospho-DNA)-tyrosine intermediate in catalysis.

Belongs to the 'phage' integrase family. XerD subfamily. In terms of assembly, forms a cyclic heterotetrameric complex composed of two molecules of XerC and two molecules of XerD.

Its subcellular location is the cytoplasm. Its function is as follows. Site-specific tyrosine recombinase, which acts by catalyzing the cutting and rejoining of the recombining DNA molecules. The XerC-XerD complex is essential to convert dimers of the bacterial chromosome into monomers to permit their segregation at cell division. It also contributes to the segregational stability of plasmids. This Brucella suis biovar 1 (strain 1330) protein is Tyrosine recombinase XerD.